A 438-amino-acid chain; its full sequence is Protein c-ets-1-A (438 aa).

Residues 49 to 134 form the PNT domain; sequence ATFSRFTKEQ…EHLEILQKDS (86 aa). Positions 128–240 are activation domain; required for transcription activation; it reads EILQKDSKQY…DNMCLGRISR (113 aa). A helix HI-1 region spans residues 301 to 309; the sequence is FKDYVRDRA. Residues 320–327 form a helix HI-2 region; sequence AAALAGYT. A DNA-binding region (ETS) is located at residues 332-412; the sequence is IQLWQFLLEL…AGKRYVYRFV (81 aa). Residues 415 to 419 form a helix H4 region; it reads LQSLL. Positions 423 to 429 are helix H5; the sequence is PEELHAM.

This sequence belongs to the ETS family. Binds DNA as a homodimer; homodimerization is required for transcription activation.

The protein localises to the nucleus. It localises to the cytoplasm. Autoinhibited by a module composed of four alpha helices (HI-1, HI-2, H4, and H5) that flank the DNA-binding ETS domain, reducing the affinity for DNA. In terms of biological role, transcription factor. Directly controls the expression of cytokine and chemokine genes in a wide variety of different cellular contexts. This Xenopus laevis (African clawed frog) protein is Protein c-ets-1-A (ets1-a).